The primary structure comprises 373 residues: Dimethylallyltryptophan synthase CymD (373 aa).

The L-tryptophan site is built by Asp-55, Val-56, and Glu-64. Residue Glu-64 is the Nucleophile of the active site. The dimethylallyl diphosphate site is built by Gln-77, Lys-146, Trp-148, Arg-205, and Lys-207. Residue Arg-211 participates in L-tryptophan binding. Tyr-274 serves as a coordination point for dimethylallyl diphosphate. Residue Tyr-326 coordinates L-tryptophan. 3 residues coordinate dimethylallyl diphosphate: Arg-337, Lys-339, and Tyr-341. The region spanning 346–373 is the FtsK domain; it reads MHDVTPPPLGVSQQHHLSGQTTARGRTE.

Its function is as follows. Dimethylallyltryptophan synthase; part of the gene cluster that mediates the biosynthesis of cyclic heptapeptides, known as cyclomarins and also of cyclic dipeptides, called cyclomarazines, which have both antimicrobial and cytotoxic effects. Catalyzes the reverse N-prenylation of monomeric L-tryptophan with dimethylallyl diphosphate (DMAPP) to form N-(1,1-dimethylallyl)-tryptophan (r-N-DMAT). The formation of r-N-DMAT appears to proceed via the deprotonation of the indole nitrogen of tryptophan, which facilitates a nucleophilic attack on the carbocation that is forming on the dimethylallyl group as the diphosphate dissociates. The N-(1,1-dimethylallyl)-tryptophan produced by CymD is combined with a range of standard and nonproteinogenic amino acid substrates to synthesize the peptides, a process that is probably catalyzed by the non-canonical nonribosomal peptide synthetase (NRPS), CymA. Other proteins in the cluster catalyze further modifications of the peptides including CymV which catalyzes the oxidation of olefinic cyclomarins and cyclomarazines to their respective epoxide derivatives. Utilizes only DMAPP as the prenyl donor and has no requirement for divalent cations. In Salinispora arenicola (strain CNS-205), this protein is Dimethylallyltryptophan synthase CymD.